Here is a 392-residue protein sequence, read N- to C-terminus: Meiotically up-regulated gene 11 protein (392 aa).

The protein resides in the cytoplasm. Its subcellular location is the nucleus. Its function is as follows. Has a role in meiosis. This is Meiotically up-regulated gene 11 protein (mug11) from Schizosaccharomyces pombe (strain 972 / ATCC 24843) (Fission yeast).